We begin with the raw amino-acid sequence, 203 residues long: ATP-dependent Clp protease proteolytic subunit 1 (203 aa).

Residue Ser-101 is the Nucleophile of the active site. His-126 is an active-site residue.

The protein belongs to the peptidase S14 family. In terms of assembly, fourteen ClpP subunits assemble into 2 heptameric rings which stack back to back to give a disk-like structure with a central cavity, resembling the structure of eukaryotic proteasomes.

The protein resides in the cytoplasm. The catalysed reaction is Hydrolysis of proteins to small peptides in the presence of ATP and magnesium. alpha-casein is the usual test substrate. In the absence of ATP, only oligopeptides shorter than five residues are hydrolyzed (such as succinyl-Leu-Tyr-|-NHMec, and Leu-Tyr-Leu-|-Tyr-Trp, in which cleavage of the -Tyr-|-Leu- and -Tyr-|-Trp bonds also occurs).. In terms of biological role, cleaves peptides in various proteins in a process that requires ATP hydrolysis. Has a chymotrypsin-like activity. Plays a major role in the degradation of misfolded proteins. The chain is ATP-dependent Clp protease proteolytic subunit 1 from Synechococcus sp. (strain JA-2-3B'a(2-13)) (Cyanobacteria bacterium Yellowstone B-Prime).